Here is a 173-residue protein sequence, read N- to C-terminus: Crossover junction endodeoxyribonuclease RuvC (173 aa).

Residues aspartate 8, glutamate 67, and aspartate 139 contribute to the active site. Aspartate 8, glutamate 67, and aspartate 139 together coordinate Mg(2+).

The protein belongs to the RuvC family. Homodimer which binds Holliday junction (HJ) DNA. The HJ becomes 2-fold symmetrical on binding to RuvC with unstacked arms; it has a different conformation from HJ DNA in complex with RuvA. In the full resolvosome a probable DNA-RuvA(4)-RuvB(12)-RuvC(2) complex forms which resolves the HJ. It depends on Mg(2+) as a cofactor.

It localises to the cytoplasm. The catalysed reaction is Endonucleolytic cleavage at a junction such as a reciprocal single-stranded crossover between two homologous DNA duplexes (Holliday junction).. Functionally, the RuvA-RuvB-RuvC complex processes Holliday junction (HJ) DNA during genetic recombination and DNA repair. Endonuclease that resolves HJ intermediates. Cleaves cruciform DNA by making single-stranded nicks across the HJ at symmetrical positions within the homologous arms, yielding a 5'-phosphate and a 3'-hydroxyl group; requires a central core of homology in the junction. The consensus cleavage sequence is 5'-(A/T)TT(C/G)-3'. Cleavage occurs on the 3'-side of the TT dinucleotide at the point of strand exchange. HJ branch migration catalyzed by RuvA-RuvB allows RuvC to scan DNA until it finds its consensus sequence, where it cleaves and resolves the cruciform DNA. The polypeptide is Crossover junction endodeoxyribonuclease RuvC (Klebsiella pneumoniae subsp. pneumoniae (strain ATCC 700721 / MGH 78578)).